Here is a 28-residue protein sequence, read N- to C-terminus: Trypsin inhibitor A (28 aa).

3 disulfide bridges follow: Cys3-Cys20, Cys10-Cys22, and Cys16-Cys27.

The protein belongs to the protease inhibitor I7 (squash-type serine protease inhibitor) family.

It localises to the secreted. Its function is as follows. Inhibits trypsin. The chain is Trypsin inhibitor A from Momordica charantia (Bitter gourd).